The chain runs to 430 residues: Proteinase-activated receptor 1 (430 aa).

The first 21 residues, 1-21 (MGPRRLLIVALGLSLCGPLLS), serve as a signal peptide directing secretion. Positions 22-41 (SRVPMSQPESERTDATVNPR) are cleaved as a propeptide — removed for receptor activation. The Extracellular segment spans residues 42–107 (SFFLRNPSEN…SGYLTSPWLT (66 aa)). Asparagine 67 and asparagine 80 each carry an N-linked (GlcNAc...) asparagine glycan. A helical membrane pass occupies residues 108 to 133 (LFMPSVYTIVFIVSLPLNVLAIAVFV). Residues 134–142 (LRMKVKKPA) are Cytoplasmic-facing. A helical membrane pass occupies residues 143 to 162 (VVYMLHLAMADVLFVSVLPF). Residues 163–181 (KISYYFSGTDWQFGSGMCR) are Extracellular-facing. A disulfide bond links cysteine 180 and cysteine 259. Residues 182–203 (FATAAFYGNMYASIMLMTVISI) form a helical membrane-spanning segment. Over 204–223 (DRFLAVVYPIQSLSWRTLGR) the chain is Cytoplasmic. The chain crosses the membrane as a helical span at residues 224–244 (ANFTCVVIWVMAIMGVVPLLL). Residues 245–273 (KEQTTRVPGLNITTCHDVLSENLMQGFYS) lie on the Extracellular side of the membrane. An N-linked (GlcNAc...) asparagine glycan is attached at asparagine 255. Residues 274–293 (YYFSAFSAIFFLVPLIVSTV) traverse the membrane as a helical segment. Residues 294 to 316 (CYTSIIRCLSSSAVANRSKKSRA) are Cytoplasmic-facing. A helical transmembrane segment spans residues 317 to 339 (LFLSAAVFCIFIVCFGPTNVLLI). The Extracellular segment spans residues 340 to 354 (VHYLFLSDSPGTEAA). A helical transmembrane segment spans residues 355 to 379 (YFAYLLCVCVSSVSCCIDPLIYYYA). Topologically, residues 380 to 430 (SSECQRHLYSILCCKESSDPNSCNSTGQLMPSKMDTCSSHLNNSIYKKLLA) are cytoplasmic. Serine 423 is modified (phosphoserine).

The protein belongs to the G-protein coupled receptor 1 family. In terms of processing, proteolytic cleavage by thrombin generates a new N-terminus that functions as a tethered ligand. Also proteolytically cleaved by cathepsin CTSG. Phosphorylated in the C-terminal tail; probably mediating desensitization prior to the uncoupling and internalization of the receptor.

Its subcellular location is the cell membrane. Functionally, high affinity receptor that binds the activated thrombin, leading to calcium release from intracellular stores. The thrombin-activated receptor signaling pathway is mediated through PTX-insensitive G proteins, activation of phospholipase C resulting in the production of 1D-myo-inositol 1,4,5-trisphosphate (InsP3) which binds to InsP3 receptors causing calcium release from the stores. In astrocytes, the calcium released into the cytosol allows the Ca(2+)-dependent release of L-glutamate into the synaptic cleft through BEST1, that targets the neuronal postsynaptic GRIN2A/NMDAR receptor resulting in the synaptic plasticity regulation. May play a role in platelets activation and in vascular development. Mediates up-regulation of pro-inflammatory cytokines, such as MCP-1/CCL2 and IL6, triggered by coagulation factor Xa (F10) in cardiac fibroblasts and umbilical vein endothelial cells. The sequence is that of Proteinase-activated receptor 1 from Mus musculus (Mouse).